The following is a 1261-amino-acid chain: MPNGKQQHEVTESSSPPEIPHITANMIPLSNIIKYYTQEAYKQLTTAIENLSMNVNEESDIKRKKYFLNVIINLRQDFIKVYTLIKWASISKDVSKFIDLLNWFRIQEFHFENLIFQLNALTGYNAAKLPNSDIITALEVLYHGRPKLPSYNYIKSDNLSPQKILETLNDLNLVLMTRFALMDNIPKRFDYEIKDGRAYIRVSNEFEVSITVGNDLIIDNPEEYYKSPFYFIDFKFLFGANPESGLITFNDDKISTKLPTSSHKKLEKLVNQTLLTRGLQGLYELLHKYSNSFKIYLLAKQFQTLLINSRWRGNFQINYQTNKSLIVINYWSQHYLSRNWKSFIELGIDSHSNLNYRWFKNGQYCFGDQGNNELDKIFHLQRRNSNNGVTTSSNTISTSAMIAGIRRSTELSNETAIVDDNDNDNDDTNNTGETENEDLNVDLILNVVVNQHAKSIMSEIYSQLLTRFSETDVSMVSPHQLLLQISPKKSTVFAINPLTGFFYFIDPTPIQTYITKKINSPPPTLSQVSIKQSFIPESDMISYVIDQIIQLRLEVFNKEVNTKLATTAWINNGIIKLSDHELSKLTQFLIQNEEQEGDDNEEDSSTNTRLDSVLQSFKVQFYRRKNWPSSWFLINMISGVTTKSFWWVARIKSISGDWKIQWAQIIKFHGDNAKQELSPNESKVFDKPKRTVDCSIESEQLNFEFFKTLSTLSSNLILDHMILEELQVRSIKFIKLDWETIDDNKIFSKFKQNHDISLKRKNSHNINIDVNVDVADNTSTTTNTKYIRAPKLKYESMFLIYNDKLLPIYNSATILFLKIELVESNKMYLKLFGNLRNLQIKNTSEDIQKLHLNIDEANQYFEIDNTVDLSTVINEPKTLLLNLIFNTLNKLNSLIKILDQLNKSNVTVLDNSMDNITINIKDKYNDNNDKLIIIKLPEQATDSIQLLMKNGSTTTTDEIDLRNNNILEFELILKFLNQYLRESKSNNHNRQQISIIKIIQYLTEINPILQSTKAINQQLAELKRINSTNNNNNNAKRRSILKLSNGLYKLYFNLNIISLTHLQLVFFMNSNTGSNLKKIQRDKIMINLSLIKFDRFSKPNGNFQDSTNGHLIKISFKDSLINENLKFKNLFEIIFKNINELLITKSKQIKSLNQTENQQQQQPLKQEDNSDSAIIKKESQSIEDDLLDFGEYDNDIKPQQQEPQQNEKENSKTTSKENETVRPDDILIKLNYDYLLSMNNLQLMINEITKSCFQYLQQQQE.

Over residues 1–11 (MPNGKQQHEVT) the composition is skewed to basic and acidic residues. Disordered stretches follow at residues 1-21 (MPNG…EIPH), 413-435 (NETA…GETE), and 1193-1220 (DNDI…ENET). Residues 417 to 427 (IVDDNDNDNDD) show a composition bias toward acidic residues. The span at 1205-1220 (QNEKENSKTTSKENET) shows a compositional bias: basic and acidic residues.

Belongs to the Mediator complex subunit 14 family. As to quaternary structure, component of the Mediator complex.

The protein resides in the nucleus. Functionally, component of the Mediator complex, a coactivator involved in the regulated transcription of nearly all RNA polymerase II-dependent genes. Mediator functions as a bridge to convey information from gene-specific regulatory proteins to the basal RNA polymerase II transcription machinery. Mediator is recruited to promoters by direct interactions with regulatory proteins and serves as a scaffold for the assembly of a functional preinitiation complex with RNA polymerase II and the general transcription factors. This chain is Mediator of RNA polymerase II transcription subunit 14 (MED14), found in Candida albicans (strain SC5314 / ATCC MYA-2876) (Yeast).